The following is a 330-amino-acid chain: 5'-AMP-activated protein kinase subunit gamma-1 (330 aa).

Low complexity predominate over residues Met1–Pro12. Residues Met1–Ser25 form a disordered region. CBS domains are found at residues Pro42 to Leu102, Ser124 to Glu186, and Ile197 to Val259. ADP-binding positions include Arg69, Met84 to Asp89, Val129, His150 to Arg151, and Lys169. AMP is bound by residues Arg69, Met84–Asp89, Val129, His150, His150–Arg151, Lys169, Thr199, Ala204, Ser225–Ala226, and Ser241–Asp244. Residues Arg69, Met84–Asp89, Val129, His150–Arg151, Arg151, and Lys169 contribute to the ATP site. An AMPK pseudosubstrate motif is present at residues Leu137–Glu158. An ADP-binding site is contributed by Ser241–Asp244. Ser241–Asp244 is a binding site for ATP. Ser260 carries the phosphoserine; by ULK1 modification. Thr262 is subject to Phosphothreonine; by ULK1. Arg268 contacts ADP. AMP is bound at residue Arg268. Arg268 is a binding site for ATP. At Ser269 the chain carries Phosphoserine; by ULK1. A CBS 4 domain is found at Tyr271–Lys328. Residues Leu276 and His297–Arg298 contribute to the ADP site. Residues Leu276, His297, His297–Arg298, and Ser313–Asp316 contribute to the AMP site. ATP contacts are provided by residues Leu276 and His297–Arg298.

This sequence belongs to the 5'-AMP-activated protein kinase gamma subunit family. AMPK is a heterotrimer of an alpha catalytic subunit (PRKAA1 or PRKAA2), a beta (PRKAB1 or PRKAB2) and a gamma non-catalytic subunits (PRKAG1, PRKAG2 or PRKAG3). Interacts with FNIP1 and FNIP2. In terms of processing, phosphorylated by ULK1 and ULK2; leading to negatively regulate AMPK activity and suggesting the existence of a regulatory feedback loop between ULK1, ULK2 and AMPK. There is some ambiguity for a phosphosite: Ser-260/Thr-262. Glycosylated; O-GlcNAcylated by OGT, promoting the AMP-activated protein kinase (AMPK) activity. In terms of tissue distribution, highly expressed in heart and brain, also found in kidney, white adipose tissue, lung and spleen.

Its function is as follows. AMP/ATP-binding subunit of AMP-activated protein kinase (AMPK), an energy sensor protein kinase that plays a key role in regulating cellular energy metabolism. In response to reduction of intracellular ATP levels, AMPK activates energy-producing pathways and inhibits energy-consuming processes: inhibits protein, carbohydrate and lipid biosynthesis, as well as cell growth and proliferation. AMPK acts via direct phosphorylation of metabolic enzymes, and by longer-term effects via phosphorylation of transcription regulators. Also acts as a regulator of cellular polarity by remodeling the actin cytoskeleton; probably by indirectly activating myosin. Gamma non-catalytic subunit mediates binding to AMP, ADP and ATP, leading to activate or inhibit AMPK: AMP-binding results in allosteric activation of alpha catalytic subunit (PRKAA1 or PRKAA2) both by inducing phosphorylation and preventing dephosphorylation of catalytic subunits. ADP also stimulates phosphorylation, without stimulating already phosphorylated catalytic subunit. ATP promotes dephosphorylation of catalytic subunit, rendering the AMPK enzyme inactive. The sequence is that of 5'-AMP-activated protein kinase subunit gamma-1 (Prkag1) from Rattus norvegicus (Rat).